The chain runs to 323 residues: Phosphate acyltransferase (323 aa).

The protein belongs to the PlsX family. Homodimer. Probably interacts with PlsY.

It is found in the cytoplasm. The catalysed reaction is a fatty acyl-[ACP] + phosphate = an acyl phosphate + holo-[ACP]. It participates in lipid metabolism; phospholipid metabolism. Catalyzes the reversible formation of acyl-phosphate (acyl-PO(4)) from acyl-[acyl-carrier-protein] (acyl-ACP). This enzyme utilizes acyl-ACP as fatty acyl donor, but not acyl-CoA. This chain is Phosphate acyltransferase, found in Finegoldia magna (strain ATCC 29328 / DSM 20472 / WAL 2508) (Peptostreptococcus magnus).